Consider the following 515-residue polypeptide: 1-pyrroline-5-carboxylate dehydrogenase (515 aa).

Residues E286 and C320 contribute to the active site.

Belongs to the aldehyde dehydrogenase family. RocA subfamily.

The enzyme catalyses L-glutamate 5-semialdehyde + NAD(+) + H2O = L-glutamate + NADH + 2 H(+). The protein operates within amino-acid degradation; L-proline degradation into L-glutamate; L-glutamate from L-proline: step 2/2. The protein is 1-pyrroline-5-carboxylate dehydrogenase of Oceanobacillus iheyensis (strain DSM 14371 / CIP 107618 / JCM 11309 / KCTC 3954 / HTE831).